Here is a 311-residue protein sequence, read N- to C-terminus: tRNA-cytidine(32) 2-sulfurtransferase (311 aa).

A PP-loop motif motif is present at residues 47–52 (SGGKDS). [4Fe-4S] cluster-binding residues include cysteine 122, cysteine 125, and cysteine 213.

This sequence belongs to the TtcA family. In terms of assembly, homodimer. Mg(2+) is required as a cofactor. [4Fe-4S] cluster serves as cofactor.

It localises to the cytoplasm. It carries out the reaction cytidine(32) in tRNA + S-sulfanyl-L-cysteinyl-[cysteine desulfurase] + AH2 + ATP = 2-thiocytidine(32) in tRNA + L-cysteinyl-[cysteine desulfurase] + A + AMP + diphosphate + H(+). It functions in the pathway tRNA modification. In terms of biological role, catalyzes the ATP-dependent 2-thiolation of cytidine in position 32 of tRNA, to form 2-thiocytidine (s(2)C32). The sulfur atoms are provided by the cysteine/cysteine desulfurase (IscS) system. This Pectobacterium carotovorum subsp. carotovorum (strain PC1) protein is tRNA-cytidine(32) 2-sulfurtransferase.